The following is a 308-amino-acid chain: Coenzyme PQQ synthesis protein B (308 aa).

The protein belongs to the PqqB family.

Its pathway is cofactor biosynthesis; pyrroloquinoline quinone biosynthesis. Functionally, may be involved in the transport of PQQ or its precursor to the periplasm. The sequence is that of Coenzyme PQQ synthesis protein B from Klebsiella pneumoniae (strain 342).